Here is a 433-residue protein sequence, read N- to C-terminus: Zinc carboxypeptidase A 1 (433 aa).

The N-terminal stretch at 1-28 (MVRLNSAAGSRWWAPAMAILAVALSVEA) is a signal peptide. Residues 130-423 (DYHTLEEIHA…DSLITLLEES (294 aa)) enclose the Peptidase M14 domain. 2 residues coordinate Zn(2+): H187 and E190. Residues C253 and C276 are joined by a disulfide bond. Position 312 (H312) interacts with Zn(2+). The active-site Proton donor/acceptor is E387.

Belongs to the peptidase M14 family. Zn(2+) serves as cofactor. Expressed in the posterior midgut in pupae and female adults.

The protein resides in the secreted. In terms of biological role, involved in the digestion of the blood meal. The sequence is that of Zinc carboxypeptidase A 1 from Anopheles gambiae (African malaria mosquito).